The sequence spans 255 residues: Putative Myb family transcription factor At1g14600 (255 aa).

Positions 20-80 (RSPVPRLRWT…HLQMYRGSRI (61 aa)) constitute an HTH myb-type domain. The H-T-H motif DNA-binding region spans 51-76 (PKLVLKIMDVKGLTISHVKSHLQMYR). Positions 80 to 110 (ITLLGKPEESSSPSSRRRRRQDNEEDHLHDN) are disordered.

Its subcellular location is the nucleus. Putative transcription factor. The chain is Putative Myb family transcription factor At1g14600 from Arabidopsis thaliana (Mouse-ear cress).